Consider the following 715-residue polypeptide: Protein naked cuticle homolog (715 aa).

The EF-hand domain maps to 18–53 (KKPQPLQFSFTLYDLDGHGKITKDDIAGIVSTIYES). The segment at 256–282 (SRAKRKVVRKSRSSRKASKLTDDFSRP) is disordered. The segment covering 257-273 (RAKRKVVRKSRSSRKAS) has biased composition (basic residues). Residues 305 to 334 (ECWKSSLCRRELIEIIRDSMVKNSLCFQPN) form a required for nuclear localization and inhibition of Wnt signaling region. The disordered stretch occupies residues 639 to 690 (ELHQSVQQQQGTHQQQQQPQSSVSSPTHHHHHHAGASLLGENSGSSASAAST). 2 stretches are compositionally biased toward low complexity: residues 642 to 664 (QSVQQQQGTHQQQQQPQSSVSSP) and 673 to 690 (GASLLGENSGSSASAAST).

It belongs to the NKD family.

It is found in the cell membrane. The protein resides in the cytoplasm. It localises to the nucleus. Functionally, cell autonomous antagonist of the canonical Wnt signaling pathway. May activate a second Wnt signaling pathway that controls planar cell polarity. Required for neuroblast specification. In Aedes aegypti (Yellowfever mosquito), this protein is Protein naked cuticle homolog.